The sequence spans 365 residues: 2-aminoethylphosphonate--pyruvate transaminase (365 aa).

An N6-(pyridoxal phosphate)lysine modification is found at Lys-194.

Belongs to the class-V pyridoxal-phosphate-dependent aminotransferase family. PhnW subfamily. As to quaternary structure, homodimer. Requires pyridoxal 5'-phosphate as cofactor.

It catalyses the reaction (2-aminoethyl)phosphonate + pyruvate = phosphonoacetaldehyde + L-alanine. Involved in phosphonate degradation. The chain is 2-aminoethylphosphonate--pyruvate transaminase from Bacillus cereus (strain 03BB102).